The chain runs to 316 residues: MIKIFELKSIISIKDFERKDIDYILDEASKLEDIAKSKECCDELKGKILGLMFFEPSTRTRLSFETSMKRLGGNCIGIENTRSCSVSKGESIADTAKMFEGYSDALVIRHELEGVSKFISDIVDVPVINAGDGAGQHPTQTLLDLYTIKKELGQIDNLKIALVGDLKFGRTVHSLSNALGLYDNVELYFVAPKELRMPQEVLHDLNKKNIPYTEVDSIEEIIDKVDVLYVTRIQKERFGDLDEYLKIKGAYIVNKKMLEGKDVIVMHPLPRIDEIATDLDNTKHNKYFNQAFNAVPVRMAILKTLIKNNPKWNHIE.

The carbamoyl phosphate site is built by Arg-59 and Thr-60. Residue Lys-88 coordinates L-aspartate. The carbamoyl phosphate site is built by Arg-109, His-137, and Gln-140. L-aspartate is bound by residues Arg-170 and Arg-232. Positions 269 and 270 each coordinate carbamoyl phosphate.

The protein belongs to the aspartate/ornithine carbamoyltransferase superfamily. ATCase family. As to quaternary structure, heterooligomer of catalytic and regulatory chains.

It catalyses the reaction carbamoyl phosphate + L-aspartate = N-carbamoyl-L-aspartate + phosphate + H(+). It functions in the pathway pyrimidine metabolism; UMP biosynthesis via de novo pathway; (S)-dihydroorotate from bicarbonate: step 2/3. Functionally, catalyzes the condensation of carbamoyl phosphate and aspartate to form carbamoyl aspartate and inorganic phosphate, the committed step in the de novo pyrimidine nucleotide biosynthesis pathway. This chain is Aspartate carbamoyltransferase catalytic subunit, found in Methanobrevibacter smithii (strain ATCC 35061 / DSM 861 / OCM 144 / PS).